Consider the following 286-residue polypeptide: S-adenosylmethionine-dependent methyltransferase UmaA (286 aa).

Residues 32-33, 67-75, 93-98, and 122-123 contribute to the S-adenosyl-L-methionine site; these read YT, LLDIGCGWG, TLSRNQ, and WD. Cysteine 268 is an active-site residue.

It belongs to the CFA/CMAS family.

The protein localises to the cytoplasm. Methyltransferase that modifies short-chain fatty acids. In vitro, catalyzes the transfer of the methyl group from S-adenosyl-L-methionine (SAM) to the double bond of phospholipid-linked oleic acid to produce tuberculostearic acid (10-methylstearic-acid or TSA). The protein is S-adenosylmethionine-dependent methyltransferase UmaA of Mycobacterium tuberculosis (strain ATCC 25618 / H37Rv).